The primary structure comprises 1340 residues: TSET complex member tstE (1340 aa).

Residues 56-67 (NQSQTSPNSNDG) show a composition bias toward low complexity. 2 disordered regions span residues 56–75 (NQSQTSPNSNDGNIGGGSGG) and 110–131 (SGSGGGGSGSNSNIGGGGGGGQ). WD repeat units follow at residues 208–246 (VNQILFNCLCFHPKSPILYAAIRNEVHFYDIITKSVIGK), 250–294 (DPTE…LQTI), 345–384 (GHKKPISAIAHHPAKTILASCSTDGQLKIWDTRNNMSFLN), and 397–436 (IEHSNHYFLVFEPTGKYLVMTGSSGLTLVYGDLTSQNPQE). Positions 1216-1251 (KSHMSSTTTLRRSPSIENIRTTSTTFDSSKFNTDNQ) are enriched in polar residues. The interval 1216–1340 (KSHMSSTTTL…TPTPTTTLSS (125 aa)) is disordered. Acidic residues predominate over residues 1252 to 1275 (ELFDDDSDDDSDSGADADVDSENE). Positions 1286-1318 (ASLQHNDNSSLTNITVTDNDSNLDQDITSNTGS) are enriched in polar residues. A compositionally biased stretch (low complexity) spans 1328–1340 (LSSTPTPTTTLSS).

As to quaternary structure, component of the TSET complex, a heterohexamer composed of tstA, tstB, tstC, tstD, tstE and tstF, which may act in plasma membrane turnover. tstA, tstB, tstC and tstD are likely to be the core complex members with tstE and tstF acting as associated scaffold proteins.

The polypeptide is TSET complex member tstE (Dictyostelium discoideum (Social amoeba)).